The primary structure comprises 843 residues: Elongation factor 2 (843 aa).

A tr-type G domain is found at 17 to 253; sequence HNIRNMSVIA…LWGENFFDPA (237 aa). 26-33 serves as a coordination point for GTP; that stretch reads AHVDHGKS. Thr57 and Thr59 each carry phosphothreonine. Residue 158–161 participates in GTP binding; that stretch reads NKMD. Diphthamide is present on His700.

Belongs to the TRAFAC class translation factor GTPase superfamily. Classic translation factor GTPase family. EF-G/EF-2 subfamily. In terms of processing, phosphorylation by EF-2 kinase completely inactivates EF-2.

It is found in the cytoplasm. The catalysed reaction is GTP + H2O = GDP + phosphate + H(+). In terms of biological role, catalyzes the GTP-dependent ribosomal translocation step during translation elongation. During this step, the ribosome changes from the pre-translocational (PRE) to the post-translocational (POST) state as the newly formed A-site-bound peptidyl-tRNA and P-site-bound deacylated tRNA move to the P and E sites, respectively. Catalyzes the coordinated movement of the two tRNA molecules, the mRNA and conformational changes in the ribosome. The chain is Elongation factor 2 from Beta vulgaris (Sugar beet).